Here is a 228-residue protein sequence, read N- to C-terminus: Phosphatidate cytidylyltransferase (228 aa).

Helical transmembrane passes span 31-51 (FVVA…LVGL), 65-85 (IHYL…LIFL), 93-113 (LVIM…MIGG), 131-151 (WTGL…VSLI), 165-185 (IYLF…DLFI), and 206-226 (GVLD…GINI).

It belongs to the CDS family.

It is found in the cell membrane. The catalysed reaction is a 1,2-diacyl-sn-glycero-3-phosphate + CTP + H(+) = a CDP-1,2-diacyl-sn-glycerol + diphosphate. It functions in the pathway phospholipid metabolism; CDP-diacylglycerol biosynthesis; CDP-diacylglycerol from sn-glycerol 3-phosphate: step 3/3. The chain is Phosphatidate cytidylyltransferase (cdsA) from Rickettsia typhi (strain ATCC VR-144 / Wilmington).